A 155-amino-acid chain; its full sequence is Regulatory protein RecX (155 aa).

It belongs to the RecX family.

It is found in the cytoplasm. Functionally, modulates RecA activity. The chain is Regulatory protein RecX from Pseudomonas fluorescens (strain SBW25).